The primary structure comprises 123 residues: UPF0738 protein BCE33L1094 (123 aa).

It belongs to the UPF0738 family.

This is UPF0738 protein BCE33L1094 from Bacillus cereus (strain ZK / E33L).